The following is a 364-amino-acid chain: DNA replication and repair protein RecF (364 aa).

An ATP-binding site is contributed by Gly30 to Ser37.

Belongs to the RecF family.

The protein resides in the cytoplasm. Functionally, the RecF protein is involved in DNA metabolism; it is required for DNA replication and normal SOS inducibility. RecF binds preferentially to single-stranded, linear DNA. It also seems to bind ATP. This Caldanaerobacter subterraneus subsp. tengcongensis (strain DSM 15242 / JCM 11007 / NBRC 100824 / MB4) (Thermoanaerobacter tengcongensis) protein is DNA replication and repair protein RecF.